The chain runs to 380 residues: MTAANVPGSSIGVDALPIRENLRGKSAYGAPQLTVPVQLNTNENPHPPTKALVDDVAESVREAARELHRYPDRDAVALRTDLAAYLVRQTGVPVTVDNVWAANGSNEILQQLLQAFGGPGRSAMGFVPSYSMHPIIADGTETEWLPIFRRADFALDVDAATAAIAERRPDVVFVTSPNNPTGHSVGIAELRRVLDSAPGIVIVDEAYAEFSDAPSALTLIDEYPSKLVVSRTMSKAFAFAGGRLGYLAAAPAFIEALLLVRLPYHLSVVTQAAARAALRHANETLGSVHALAAERVRVSKALEDTGFHVIPSDANFILFGEFTDSARAWQAYLDRGVLIRDVGIPGYLRATVGLASENDAFIVASDEIAATELTSSGDRG.

Residue Lys235 is modified to N6-(pyridoxal phosphate)lysine.

It belongs to the class-II pyridoxal-phosphate-dependent aminotransferase family. Histidinol-phosphate aminotransferase subfamily. Homodimer. It depends on pyridoxal 5'-phosphate as a cofactor.

It catalyses the reaction L-histidinol phosphate + 2-oxoglutarate = 3-(imidazol-4-yl)-2-oxopropyl phosphate + L-glutamate. It participates in amino-acid biosynthesis; L-histidine biosynthesis; L-histidine from 5-phospho-alpha-D-ribose 1-diphosphate: step 7/9. This is Histidinol-phosphate aminotransferase from Rhodococcus opacus (strain B4).